A 389-amino-acid polypeptide reads, in one-letter code: uncharacterized protein (389 aa).

WD repeat units follow at residues 11-53 (SFGS…QKIK), 146-186 (SHHD…EEDA), and 289-330 (AHGD…LDIP). Serine 351 is subject to Phosphoserine. Residues 361 to 389 (QKESVSTRPRKEKHKKAKKHSMKSRFKPY) are disordered. Basic residues predominate over residues 368–389 (RPRKEKHKKAKKHSMKSRFKPY).

This is an uncharacterized protein from Saccharomyces cerevisiae (strain ATCC 204508 / S288c) (Baker's yeast).